We begin with the raw amino-acid sequence, 231 residues long: Putative carboxymethylenebutenolidase (231 aa).

Active-site residues include Asp169 and His200.

Belongs to the dienelactone hydrolase family.

The catalysed reaction is 2-(5-oxo-2,5-dihydrofuran-2-ylidene)acetate + H2O = 4-oxohex-2-enedioate + H(+). In Azospirillum brasilense, this protein is Putative carboxymethylenebutenolidase.